A 476-amino-acid polypeptide reads, in one-letter code: Probable pectin lyase F (476 aa).

The first 20 residues, 1–20 (MTLLRHLLTATALLGASVQA), serve as a signal peptide directing secretion. Cys-84 and Cys-108 are oxidised to a cystine. N-linked (GlcNAc...) asparagine glycosylation is found at Asn-103 and Asn-131. Residue Arg-258 is part of the active site. 2 N-linked (GlcNAc...) asparagine glycosylation sites follow: Asn-277 and Asn-318. The cysteines at positions 325 and 333 are disulfide-linked. N-linked (GlcNAc...) asparagine glycosylation occurs at Asn-385. A disordered region spans residues 412-476 (FVPAYSEAGP…HHHQGHGRGY (65 aa)). Over residues 426-453 (VPTQPSWSWRTVTNGPAPTGAPSDSPSA) the composition is skewed to polar residues. Residues 465-476 (NKHHHQGHGRGY) show a composition bias toward basic residues.

It belongs to the polysaccharide lyase 1 family.

It is found in the secreted. It catalyses the reaction Eliminative cleavage of (1-&gt;4)-alpha-D-galacturonan methyl ester to give oligosaccharides with 4-deoxy-6-O-methyl-alpha-D-galact-4-enuronosyl groups at their non-reducing ends.. Pectinolytic enzymes consist of four classes of enzymes: pectin lyase, polygalacturonase, pectin methylesterase and rhamnogalacturonase. Among pectinolytic enzymes, pectin lyase is the most important in depolymerization of pectin, since it cleaves internal glycosidic bonds of highly methylated pectins. The chain is Probable pectin lyase F (pelF) from Aspergillus niger (strain ATCC MYA-4892 / CBS 513.88 / FGSC A1513).